Reading from the N-terminus, the 877-residue chain is Telomere length regulation protein clk-2 (877 aa).

Polar residues predominate over residues 488–501 (NKDSAAITSKNNLR). Residues 488-509 (NKDSAAITSKNNLRLDSDDDED) are disordered.

The protein belongs to the TEL2 family.

Its subcellular location is the nucleus. It is found in the chromosome. The protein resides in the telomere. DNA damage checkpoint protein required for DNA damage-induced cell cycle arrest and apoptosis, thereby playing a role in genome stability. Regulator of telomere length. The sequence is that of Telomere length regulation protein clk-2 (clk-2) from Caenorhabditis elegans.